A 419-amino-acid chain; its full sequence is L-rhamnose isomerase (419 aa).

Mn(2+) is bound by residues histidine 262, aspartate 294, and aspartate 296.

Belongs to the rhamnose isomerase family. In terms of assembly, homotetramer. Requires Mn(2+) as cofactor.

It is found in the cytoplasm. The enzyme catalyses L-rhamnopyranose = L-rhamnulose. The protein operates within carbohydrate degradation; L-rhamnose degradation; glycerone phosphate from L-rhamnose: step 1/3. In terms of biological role, catalyzes the interconversion of L-rhamnose and L-rhamnulose. In Escherichia coli O157:H7, this protein is L-rhamnose isomerase.